The primary structure comprises 158 residues: 6,7-dimethyl-8-ribityllumazine synthase (158 aa).

Residues phenylalanine 22, 57 to 59, and 81 to 83 contribute to the 5-amino-6-(D-ribitylamino)uracil site; these read AVE and AVI. Position 86–87 (86–87) interacts with (2S)-2-hydroxy-3-oxobutyl phosphate; that stretch reads GT. Residue histidine 89 is the Proton donor of the active site. Phenylalanine 114 contributes to the 5-amino-6-(D-ribitylamino)uracil binding site. Arginine 128 provides a ligand contact to (2S)-2-hydroxy-3-oxobutyl phosphate.

Belongs to the DMRL synthase family. In terms of assembly, forms an icosahedral capsid composed of 60 subunits, arranged as a dodecamer of pentamers.

The catalysed reaction is (2S)-2-hydroxy-3-oxobutyl phosphate + 5-amino-6-(D-ribitylamino)uracil = 6,7-dimethyl-8-(1-D-ribityl)lumazine + phosphate + 2 H2O + H(+). It functions in the pathway cofactor biosynthesis; riboflavin biosynthesis; riboflavin from 2-hydroxy-3-oxobutyl phosphate and 5-amino-6-(D-ribitylamino)uracil: step 1/2. In terms of biological role, catalyzes the formation of 6,7-dimethyl-8-ribityllumazine by condensation of 5-amino-6-(D-ribitylamino)uracil with 3,4-dihydroxy-2-butanone 4-phosphate. This is the penultimate step in the biosynthesis of riboflavin. This Shewanella oneidensis (strain ATCC 700550 / JCM 31522 / CIP 106686 / LMG 19005 / NCIMB 14063 / MR-1) protein is 6,7-dimethyl-8-ribityllumazine synthase.